Reading from the N-terminus, the 289-residue chain is Nucleotide-binding protein COPRO5265_0725 (289 aa).

9 to 16 (GLSGAGKS) lines the ATP pocket. 59 to 62 (DSRS) contributes to the GTP binding site.

Belongs to the RapZ-like family.

Its function is as follows. Displays ATPase and GTPase activities. The protein is Nucleotide-binding protein COPRO5265_0725 of Coprothermobacter proteolyticus (strain ATCC 35245 / DSM 5265 / OCM 4 / BT).